The primary structure comprises 181 residues: MKQILDFIPLIIFFALYKMYDIYTATGALIIATAIQLVVTYALYKKVEKMQLITFIMVTVFGGMTIFLHDDNFIKWKVTIVYCVFAAGLIIAHILGKPVIKGMLGKEVTLPDDKWTKINHAWVLFFTVCAIANLYVAFEMPLDVWVNFKVFGLLGLTFLYTLFTGMYVYKHMPKEKKEEQE.

5 helical membrane passes run 22–42, 50–70, 80–100, 122–142, and 148–168; these read IYTA…VTYA, MQLI…FLHD, IVYC…KPVI, WVLF…EMPL, and FKVF…GMYV.

This sequence belongs to the YciB family.

The protein localises to the cell inner membrane. Its function is as follows. Plays a role in cell envelope biogenesis, maintenance of cell envelope integrity and membrane homeostasis. The sequence is that of Inner membrane-spanning protein YciB from Aliivibrio fischeri (strain ATCC 700601 / ES114) (Vibrio fischeri).